The primary structure comprises 245 residues: Biosynthetic peptidoglycan transglycosylase (245 aa).

A helical transmembrane segment spans residues 29 to 49 (IVLAVLIVLILPYALIVFYLL).

Belongs to the glycosyltransferase 51 family.

The protein resides in the cell inner membrane. The catalysed reaction is [GlcNAc-(1-&gt;4)-Mur2Ac(oyl-L-Ala-gamma-D-Glu-L-Lys-D-Ala-D-Ala)](n)-di-trans,octa-cis-undecaprenyl diphosphate + beta-D-GlcNAc-(1-&gt;4)-Mur2Ac(oyl-L-Ala-gamma-D-Glu-L-Lys-D-Ala-D-Ala)-di-trans,octa-cis-undecaprenyl diphosphate = [GlcNAc-(1-&gt;4)-Mur2Ac(oyl-L-Ala-gamma-D-Glu-L-Lys-D-Ala-D-Ala)](n+1)-di-trans,octa-cis-undecaprenyl diphosphate + di-trans,octa-cis-undecaprenyl diphosphate + H(+). It participates in cell wall biogenesis; peptidoglycan biosynthesis. Its function is as follows. Peptidoglycan polymerase that catalyzes glycan chain elongation from lipid-linked precursors. This Rhizobium johnstonii (strain DSM 114642 / LMG 32736 / 3841) (Rhizobium leguminosarum bv. viciae) protein is Biosynthetic peptidoglycan transglycosylase.